We begin with the raw amino-acid sequence, 235 residues long: Protein FEV (235 aa).

The ETS DNA-binding region spans 58–138; it reads IQLWQFLLEL…HGKRYAYKFD (81 aa).

The protein belongs to the ETS family. In terms of tissue distribution, expressed by serotonergic neurons in anterior and posterior raphe.

The protein resides in the nucleus. Functions as a transcriptional regulator. Functions in the differentiation and the maintenance of the central serotonergic neurons. May play a role in cell growth. This is Protein FEV (fev) from Danio rerio (Zebrafish).